The sequence spans 705 residues: Tryptophan synthase (705 aa).

Residues 1 to 293 (MEAIKKVFEQ…QLTPNAETAK (293 aa)) are tryptophan synthase alpha chain. Residues E49 and D60 each act as proton acceptor in the active site. The segment at 266–287 (KGEPSRVRSPGAAQRTPSQLTP) is disordered. Residues 294–705 (GVENILPARF…HVSSNAIPSK (412 aa)) are tryptophan synthase beta chain. At K381 the chain carries N6-(pyridoxal phosphate)lysine.

The protein in the N-terminal section; belongs to the TrpA family. In the C-terminal section; belongs to the TrpB family. The cofactor is pyridoxal 5'-phosphate.

It catalyses the reaction (1S,2R)-1-C-(indol-3-yl)glycerol 3-phosphate + L-serine = D-glyceraldehyde 3-phosphate + L-tryptophan + H2O. Its pathway is amino-acid biosynthesis; L-tryptophan biosynthesis; L-tryptophan from chorismate: step 5/5. The protein is Tryptophan synthase (TRP-1) of Coprinopsis cinerea (Inky cap fungus).